The primary structure comprises 315 residues: MKPIKIALIGAGNVGNSFLYAAMNQGLASEYGIIDINPDFADGNAFDFEDASASLPFPISVSRYEYKDLKDADFIVITAGRPQKPGETRLELVADNIRIIREIALKVKESGFSGISIIVANPVDIITRAYRDASGFSDQKVIGSGTVLDTARLQFAIAKRAKVSPNSVQAYVMGEHGDSSFVAYSNIKIAGEYFCAYSKLTGIDSSNYEKELEYPVSRRAYEIINRKRATFYGIGAAIAKIVSNIIKDTKNIMIAGANLRGEYGFHGVNIGVPVVLGANGIEKIIEISLNDKEKEKFAKSVAIIDKIYQDAIKNI.

NAD(+) contacts are provided by valine 14, aspartate 35, and tyrosine 66. Substrate is bound by residues glutamine 83, arginine 89, and 121–124 (NPVD). NAD(+) contacts are provided by residues 119-121 (VAN) and serine 144. Residue 149–152 (DTAR) participates in substrate binding. The Proton acceptor role is filled by histidine 176. Position 221 is a phosphotyrosine (tyrosine 221). Residue threonine 230 coordinates substrate.

The protein belongs to the LDH/MDH superfamily. LDH family. As to quaternary structure, homotetramer.

Its subcellular location is the cytoplasm. It catalyses the reaction (S)-lactate + NAD(+) = pyruvate + NADH + H(+). It participates in fermentation; pyruvate fermentation to lactate; (S)-lactate from pyruvate: step 1/1. Functionally, catalyzes the conversion of lactate to pyruvate. The protein is L-lactate dehydrogenase of Mesomycoplasma hyopneumoniae (strain 232) (Mycoplasma hyopneumoniae).